The chain runs to 477 residues: Proton extrusion protein PxcA (477 aa).

A run of 3 helical transmembrane segments spans residues 239 to 259 (FILL…ITFV), 354 to 374 (GIKN…IIST), and 437 to 457 (FNFL…KYWI).

This sequence belongs to the CemA family.

It is found in the cell inner membrane. Required for H(+) efflux immediately after light irradiation to form a rapid H(+) concentration gradient across the thylakoid membranes. Together with PxcL, contributes to transient H(+) uptake following dark to light transition. The polypeptide is Proton extrusion protein PxcA (Trichodesmium erythraeum (strain IMS101)).